The chain runs to 617 residues: Neopullulanase SusA (617 aa).

The first 22 residues, 1 to 22, serve as a signal peptide directing secretion; it reads MKRNLLFIILLLLLPGLHQVFA. Positions 138, 143, 144, 164, and 166 each coordinate Ca(2+). Residues Asp-331 and Glu-360 contribute to the active site.

It belongs to the glycosyl hydrolase 13 family. Ca(2+) is required as a cofactor.

The protein resides in the periplasm. It catalyses the reaction Hydrolysis of pullulan to panose (6-alpha-D-glucosylmaltose).. The protein operates within glycan degradation; starch degradation. In terms of biological role, neopullulanase that cleaves 1,4-alpha-glucosidic linkages in starch to produce disaccharides or trisaccharides in starch degradation. This is Neopullulanase SusA (susA) from Bacteroides thetaiotaomicron (strain ATCC 29148 / DSM 2079 / JCM 5827 / CCUG 10774 / NCTC 10582 / VPI-5482 / E50).